The sequence spans 493 residues: Probable UTP--glucose-1-phosphate uridylyltransferase (493 aa).

Residues Leu-105–Lys-108, Gln-181, Gly-211, and Asp-242 each bind UTP. Substrate is bound at residue Gly-107–Lys-108. Residue Asn-240–Asp-242 coordinates substrate.

It belongs to the UDPGP type 1 family.

It carries out the reaction alpha-D-glucose 1-phosphate + UTP + H(+) = UDP-alpha-D-glucose + diphosphate. In terms of biological role, plays a central role as a glucosyl donor in cellular metabolic pathways. This chain is Probable UTP--glucose-1-phosphate uridylyltransferase, found in Saccharomyces cerevisiae (strain ATCC 204508 / S288c) (Baker's yeast).